Reading from the N-terminus, the 61-residue chain is Photosystem II reaction center protein K (61 aa).

Positions 1-24 (MLNIFSLICICLHSTLYSSSFFLA) are excised as a propeptide. The helical transmembrane segment at 36–56 (IVDFMPVIPLLFFLLAFVWQA) threads the bilayer.

Belongs to the PsbK family. PSII is composed of 1 copy each of membrane proteins PsbA, PsbB, PsbC, PsbD, PsbE, PsbF, PsbH, PsbI, PsbJ, PsbK, PsbL, PsbM, PsbT, PsbX, PsbY, PsbZ, Psb30/Ycf12, at least 3 peripheral proteins of the oxygen-evolving complex and a large number of cofactors. It forms dimeric complexes.

It localises to the plastid. Its subcellular location is the chloroplast thylakoid membrane. In terms of biological role, one of the components of the core complex of photosystem II (PSII). PSII is a light-driven water:plastoquinone oxidoreductase that uses light energy to abstract electrons from H(2)O, generating O(2) and a proton gradient subsequently used for ATP formation. It consists of a core antenna complex that captures photons, and an electron transfer chain that converts photonic excitation into a charge separation. The protein is Photosystem II reaction center protein K of Eucalyptus globulus subsp. globulus (Tasmanian blue gum).